Here is a 284-residue protein sequence, read N- to C-terminus: Putative ABC transporter ATP-binding protein MG468.1 homolog (284 aa).

The ABC transporter domain occupies 53–284 (VLFKGVCKAV…PKTINEINWV (232 aa)). 89-96 (GKSGSGKT) contributes to the ATP binding site.

It belongs to the ABC transporter superfamily.

The sequence is that of Putative ABC transporter ATP-binding protein MG468.1 homolog from Mycoplasma pneumoniae (strain ATCC 29342 / M129 / Subtype 1) (Mycoplasmoides pneumoniae).